A 1032-amino-acid chain; its full sequence is Putative oxidoreductase YgfK (1032 aa).

The region spanning 928–958 (RFQTLHLDAYCNECGNCAQFCPWNGKPYKDK) is the 4Fe-4S ferredoxin-type domain. [4Fe-4S] cluster is bound by residues cysteine 938, cysteine 941, cysteine 944, and cysteine 948.

The cofactor is [4Fe-4S] cluster.

Functionally, could be an iron-sulfur flavoprotein with NADPH:O(2) oxidoreductase activity. This Escherichia coli (strain K12) protein is Putative oxidoreductase YgfK (ygfK).